The primary structure comprises 514 residues: Cobyric acid synthase (514 aa).

The GATase cobBQ-type domain occupies 258 to 458; that stretch reads ALMVGVVRLP…IHGIFDNDGL (201 aa). Residue Cys339 is the Nucleophile of the active site. His450 is an active-site residue.

Belongs to the CobB/CobQ family. CobQ subfamily.

The protein operates within cofactor biosynthesis; adenosylcobalamin biosynthesis. Catalyzes amidations at positions B, D, E, and G on adenosylcobyrinic A,C-diamide. NH(2) groups are provided by glutamine, and one molecule of ATP is hydrogenolyzed for each amidation. This chain is Cobyric acid synthase, found in Syntrophobacter fumaroxidans (strain DSM 10017 / MPOB).